The chain runs to 277 residues: Ubiquinone biosynthesis protein COQ4, mitochondrial (277 aa).

Residues 1-14 (MLTKRALRTTDPYR) constitute a mitochondrion transit peptide. The Zn(2+) site is built by H157, D158, H161, and E173.

The protein belongs to the COQ4 family. In terms of assembly, component of a multi-subunit COQ enzyme complex, composed of at least COQ3, COQ4, COQ5, COQ6, COQ7 and COQ9. Zn(2+) is required as a cofactor.

The protein localises to the mitochondrion inner membrane. It catalyses the reaction a 4-hydroxy-3-methoxy-5-(all-trans-polyprenyl)benzoate + H(+) = a 2-methoxy-6-(all-trans-polyprenyl)phenol + CO2. The protein operates within cofactor biosynthesis; ubiquinone biosynthesis. Lyase that catalyzes the C1-decarboxylation of 4-hydroxy-3-methoxy-5-(all-trans-polyprenyl)benzoic acid into 2-methoxy-6-(all-trans-polyprenyl)phenol during ubiquinone biosynthesis. This is Ubiquinone biosynthesis protein COQ4, mitochondrial from Ajellomyces capsulatus (strain G186AR / H82 / ATCC MYA-2454 / RMSCC 2432) (Darling's disease fungus).